A 583-amino-acid chain; its full sequence is 2-succinyl-5-enolpyruvyl-6-hydroxy-3-cyclohexene-1-carboxylate synthase (583 aa).

Belongs to the TPP enzyme family. MenD subfamily. In terms of assembly, homodimer. Mg(2+) is required as a cofactor. Requires Mn(2+) as cofactor. Thiamine diphosphate serves as cofactor.

It catalyses the reaction isochorismate + 2-oxoglutarate + H(+) = 5-enolpyruvoyl-6-hydroxy-2-succinyl-cyclohex-3-ene-1-carboxylate + CO2. The protein operates within quinol/quinone metabolism; 1,4-dihydroxy-2-naphthoate biosynthesis; 1,4-dihydroxy-2-naphthoate from chorismate: step 2/7. It functions in the pathway quinol/quinone metabolism; menaquinone biosynthesis. Its function is as follows. Catalyzes the thiamine diphosphate-dependent decarboxylation of 2-oxoglutarate and the subsequent addition of the resulting succinic semialdehyde-thiamine pyrophosphate anion to isochorismate to yield 2-succinyl-5-enolpyruvyl-6-hydroxy-3-cyclohexene-1-carboxylate (SEPHCHC). This is 2-succinyl-5-enolpyruvyl-6-hydroxy-3-cyclohexene-1-carboxylate synthase from Chlorobium limicola (strain DSM 245 / NBRC 103803 / 6330).